Reading from the N-terminus, the 279-residue chain is 3-methyl-2-oxobutanoate hydroxymethyltransferase (279 aa).

2 residues coordinate Mg(2+): aspartate 43 and aspartate 82. 3-methyl-2-oxobutanoate contacts are provided by residues 43-44 (DS), aspartate 82, and lysine 112. Glutamate 114 is a binding site for Mg(2+). Catalysis depends on glutamate 181, which acts as the Proton acceptor.

Belongs to the PanB family. In terms of assembly, homodecamer; pentamer of dimers. Mg(2+) is required as a cofactor.

The protein localises to the cytoplasm. It catalyses the reaction 3-methyl-2-oxobutanoate + (6R)-5,10-methylene-5,6,7,8-tetrahydrofolate + H2O = 2-dehydropantoate + (6S)-5,6,7,8-tetrahydrofolate. Its pathway is cofactor biosynthesis; (R)-pantothenate biosynthesis; (R)-pantoate from 3-methyl-2-oxobutanoate: step 1/2. In terms of biological role, catalyzes the reversible reaction in which hydroxymethyl group from 5,10-methylenetetrahydrofolate is transferred onto alpha-ketoisovalerate to form ketopantoate. The chain is 3-methyl-2-oxobutanoate hydroxymethyltransferase from Lysinibacillus sphaericus (strain C3-41).